A 233-amino-acid polypeptide reads, in one-letter code: Phosphatidylserine decarboxylase proenzyme (233 aa).

Ser-188 serves as the catalytic Schiff-base intermediate with substrate; via pyruvic acid. Position 188 is a pyruvic acid (Ser); by autocatalysis (Ser-188).

The protein belongs to the phosphatidylserine decarboxylase family. PSD-A subfamily. Heterodimer of a large membrane-associated beta subunit and a small pyruvoyl-containing alpha subunit. Pyruvate is required as a cofactor. In terms of processing, is synthesized initially as an inactive proenzyme. Formation of the active enzyme involves a self-maturation process in which the active site pyruvoyl group is generated from an internal serine residue via an autocatalytic post-translational modification. Two non-identical subunits are generated from the proenzyme in this reaction, and the pyruvate is formed at the N-terminus of the alpha chain, which is derived from the carboxyl end of the proenzyme. The post-translation cleavage follows an unusual pathway, termed non-hydrolytic serinolysis, in which the side chain hydroxyl group of the serine supplies its oxygen atom to form the C-terminus of the beta chain, while the remainder of the serine residue undergoes an oxidative deamination to produce ammonia and the pyruvoyl prosthetic group on the alpha chain.

It localises to the cell membrane. It catalyses the reaction a 1,2-diacyl-sn-glycero-3-phospho-L-serine + H(+) = a 1,2-diacyl-sn-glycero-3-phosphoethanolamine + CO2. The protein operates within phospholipid metabolism; phosphatidylethanolamine biosynthesis; phosphatidylethanolamine from CDP-diacylglycerol: step 2/2. Catalyzes the formation of phosphatidylethanolamine (PtdEtn) from phosphatidylserine (PtdSer). In Ruegeria sp. (strain TM1040) (Silicibacter sp.), this protein is Phosphatidylserine decarboxylase proenzyme.